The chain runs to 261 residues: Global transcriptional regulator CodY (261 aa).

The GAF domain stretch occupies residues 1–159 (MANLLSKTRR…SSTVVGIQLL (159 aa)). Positions 207-226 (ASVIADRIGITRSVIVNALR) form a DNA-binding region, H-T-H motif.

It belongs to the CodY family.

It is found in the cytoplasm. Its function is as follows. DNA-binding global transcriptional regulator which is involved in the adaptive response to starvation and acts by directly or indirectly controlling the expression of numerous genes in response to nutrient availability. During rapid exponential growth, CodY is highly active and represses genes whose products allow adaptation to nutrient depletion. The sequence is that of Global transcriptional regulator CodY from Streptococcus mutans serotype c (strain ATCC 700610 / UA159).